The primary structure comprises 283 residues: 2-dehydro-3-deoxyphosphooctonate aldolase (283 aa).

It belongs to the KdsA family.

The protein localises to the cytoplasm. It catalyses the reaction D-arabinose 5-phosphate + phosphoenolpyruvate + H2O = 3-deoxy-alpha-D-manno-2-octulosonate-8-phosphate + phosphate. Its pathway is carbohydrate biosynthesis; 3-deoxy-D-manno-octulosonate biosynthesis; 3-deoxy-D-manno-octulosonate from D-ribulose 5-phosphate: step 2/3. The protein operates within bacterial outer membrane biogenesis; lipopolysaccharide biosynthesis. The chain is 2-dehydro-3-deoxyphosphooctonate aldolase from Methylococcus capsulatus (strain ATCC 33009 / NCIMB 11132 / Bath).